We begin with the raw amino-acid sequence, 148 residues long: HTH-type transcriptional regulator Rv2324 (148 aa).

Residues 4-65 (LDDTDERILA…VVDRNALGWN (62 aa)) form the HTH asnC-type domain. Positions 23 to 42 (FAEIGHKVSLSAPAVKRRVD) form a DNA-binding region, H-T-H motif.

In terms of assembly, homodimer. Forms oligomers.

Its activity is regulated as follows. The DNA-binding activity of Rv2324 is modulated by interaction of Rv2324 with amino acids. Aspartate is the only effector amino acid that completely abolishes DNA binding. The majority of amino acids induce a dimer-tetramer or dimer-hexamer oligomeric transition. In response to amino-acid binding, adopts an open quaternary association, which is a part of the functional requirement to bind to non-symmetrically distributed target DNA binding sites. Transcriptional regulator involved in growth, DNA replication and damage control. Plays a crucial role in regulating survival and growth of M.tuberculosis. Could function as a global regulator in both the latent/persistent and active phases of growth. Binds to its own promoter region and to promoters of multiple metabolic genes, such as serB2, lat, ald and roc operon. In vitro, interacts with intrinsically curved and non-curved DNA molecules, and with both supercoiled and linear DNA, with higher affinity for supercoiled DNA. Binds to DNA recombination, replication and repair intermediates. In Mycobacterium tuberculosis (strain ATCC 25618 / H37Rv), this protein is HTH-type transcriptional regulator Rv2324.